Consider the following 254-residue polypeptide: Alcohol dehydrogenase (254 aa).

10 to 33 (FVAGLGGIGLETSREIVKSGPKNL) contributes to the NAD(+) binding site. Substrate is bound at residue serine 138. The Proton acceptor role is filled by tyrosine 151.

It belongs to the short-chain dehydrogenases/reductases (SDR) family. In terms of assembly, homodimer.

The catalysed reaction is a primary alcohol + NAD(+) = an aldehyde + NADH + H(+). The enzyme catalyses a secondary alcohol + NAD(+) = a ketone + NADH + H(+). The chain is Alcohol dehydrogenase (Adh) from Scaptomyza crassifemur (Fruit fly).